The sequence spans 201 residues: Inosine triphosphate pyrophosphatase (201 aa).

13 to 18 (TGNAKK) contributes to the ITP binding site. Glutamate 43 provides a ligand contact to Mg(2+). ITP-binding positions include lysine 55, 71–72 (DT), lysine 88, 148–151 (FGWD), lysine 171, and 176–177 (HR).

This sequence belongs to the HAM1 NTPase family. As to quaternary structure, homodimer. Requires Mg(2+) as cofactor. It depends on Mn(2+) as a cofactor.

It is found in the cytoplasm. The catalysed reaction is ITP + H2O = IMP + diphosphate + H(+). The enzyme catalyses dITP + H2O = dIMP + diphosphate + H(+). It carries out the reaction XTP + H2O = XMP + diphosphate + H(+). It catalyses the reaction N(6)-hydroxy-dATP + H2O = N(6)-hydroxy-dAMP + diphosphate + H(+). Its function is as follows. Pyrophosphatase that hydrolyzes the non-canonical purine nucleotides inosine triphosphate (ITP), deoxyinosine triphosphate (dITP) as well as 2'-deoxy-N-6-hydroxylaminopurine triphosphate (dHAPTP) and xanthosine 5'-triphosphate (XTP) to their respective monophosphate derivatives. The enzyme does not distinguish between the deoxy- and ribose forms. Probably excludes non-canonical purines from RNA and DNA precursor pools, thus preventing their incorporation into RNA and DNA and avoiding chromosomal lesions. In Gallus gallus (Chicken), this protein is Inosine triphosphate pyrophosphatase.